Consider the following 283-residue polypeptide: Phosphatidylserine decarboxylase proenzyme (283 aa).

Active-site charge relay system; for autoendoproteolytic cleavage activity residues include Asp88, His145, and Ser248. The active-site Schiff-base intermediate with substrate; via pyruvic acid; for decarboxylase activity is the Ser248. Ser248 is modified (pyruvic acid (Ser); by autocatalysis).

This sequence belongs to the phosphatidylserine decarboxylase family. PSD-B subfamily. Prokaryotic type I sub-subfamily. Heterodimer of a large membrane-associated beta subunit and a small pyruvoyl-containing alpha subunit. The cofactor is pyruvate. Post-translationally, is synthesized initially as an inactive proenzyme. Formation of the active enzyme involves a self-maturation process in which the active site pyruvoyl group is generated from an internal serine residue via an autocatalytic post-translational modification. Two non-identical subunits are generated from the proenzyme in this reaction, and the pyruvate is formed at the N-terminus of the alpha chain, which is derived from the carboxyl end of the proenzyme. The autoendoproteolytic cleavage occurs by a canonical serine protease mechanism, in which the side chain hydroxyl group of the serine supplies its oxygen atom to form the C-terminus of the beta chain, while the remainder of the serine residue undergoes an oxidative deamination to produce ammonia and the pyruvoyl prosthetic group on the alpha chain. During this reaction, the Ser that is part of the protease active site of the proenzyme becomes the pyruvoyl prosthetic group, which constitutes an essential element of the active site of the mature decarboxylase.

The protein localises to the cell membrane. It carries out the reaction a 1,2-diacyl-sn-glycero-3-phospho-L-serine + H(+) = a 1,2-diacyl-sn-glycero-3-phosphoethanolamine + CO2. It functions in the pathway phospholipid metabolism; phosphatidylethanolamine biosynthesis; phosphatidylethanolamine from CDP-diacylglycerol: step 2/2. Functionally, catalyzes the formation of phosphatidylethanolamine (PtdEtn) from phosphatidylserine (PtdSer). This is Phosphatidylserine decarboxylase proenzyme from Variovorax paradoxus (strain S110).